Reading from the N-terminus, the 358-residue chain is D-xylulose reductase A (358 aa).

Residues Cys47, His72, and Glu73 each coordinate Zn(2+). 182–187 (GAGPVG) contributes to the NAD(+) binding site.

This sequence belongs to the zinc-containing alcohol dehydrogenase family. Zn(2+) is required as a cofactor.

It carries out the reaction xylitol + NAD(+) = D-xylulose + NADH + H(+). Its pathway is carbohydrate degradation; L-arabinose degradation via L-arabinitol; D-xylulose 5-phosphate from L-arabinose (fungal route): step 4/5. Its function is as follows. Xylitol dehydrogenase which catalyzes the conversion of xylitol to D-xylulose. Xylose is a major component of hemicelluloses such as xylan. Most fungi utilize D-xylose via three enzymatic reactions, xylose reductase (XR), xylitol dehydrogenase (XDH), and xylulokinase, to form xylulose 5-phosphate, which enters pentose phosphate pathway. The sequence is that of D-xylulose reductase A (xdhA) from Aspergillus oryzae (strain ATCC 42149 / RIB 40) (Yellow koji mold).